An 889-amino-acid chain; its full sequence is TATA box-binding protein-associated factor RNA polymerase I subunit B (889 aa).

The segment at 1 to 33 (MAPETNEKCKACGGFNFSMIDGFKYCDRCGTLL) adopts an RRN7-type zinc-finger fold. The Zn(2+) site is built by Cys9, Cys12, Cys26, and Cys29. The B-reader stretch occupies residues 35-101 (NFEELEAEEG…DFFSRQALKN (67 aa)). The interval 102-113 (DELAFPHESTPD) is B-linker. The tract at residues 114–351 (YLYRLGLRLA…SAKEQETKEA (238 aa)) is N-terminal cyclin fold. The disordered stretch occupies residues 229–253 (NLDLDSEEDEEEEENPNLNKSMENL). The segment covering 230-243 (LDLDSEEDEEEEEN) has biased composition (acidic residues). The tract at residues 352–510 (MTKVDYAEPY…LLVFRLTFDI (159 aa)) is C-terminal cyclin fold.

Belongs to the RRN7/TAF1B family.

Its subcellular location is the nucleus. It localises to the nucleolus. Functionally, component of RNA polymerase I core factor complex that acts as a GTF2B/TFIIB-like factor and plays a key role in multiple steps during transcription initiation such as pre-initiation complex (PIC) assembly and postpolymerase recruitment events in polymerase I (Pol I) transcription. Binds rDNA promoters and plays a role in Pol I recruitment. The sequence is that of TATA box-binding protein-associated factor RNA polymerase I subunit B from Caenorhabditis briggsae.